The following is a 189-amino-acid chain: GMP synthase [glutamine-hydrolyzing] subunit A (189 aa).

The Glutamine amidotransferase type-1 domain occupies 5–189; the sequence is KILVVNNYGQ…TNFFEVCDRY (185 aa). Cysteine 79 serves as the catalytic Nucleophile. Catalysis depends on residues histidine 166 and glutamate 168.

Heterodimer composed of a glutamine amidotransferase subunit (A) and a GMP-binding subunit (B).

The catalysed reaction is XMP + L-glutamine + ATP + H2O = GMP + L-glutamate + AMP + diphosphate + 2 H(+). It functions in the pathway purine metabolism; GMP biosynthesis; GMP from XMP (L-Gln route): step 1/1. Its function is as follows. Catalyzes the synthesis of GMP from XMP. This chain is GMP synthase [glutamine-hydrolyzing] subunit A, found in Methanosarcina acetivorans (strain ATCC 35395 / DSM 2834 / JCM 12185 / C2A).